A 487-amino-acid chain; its full sequence is Schwannomin-interacting protein 1 (487 aa).

Disordered regions lie at residues 1 to 74, 88 to 221, 236 to 260, and 308 to 354; these read MERS…VSAL, VIDE…PVPP, FREQEVRNQGQARTNSTSAQKNERE, and SGSD…SLDD. The segment covering 14 to 27 has biased composition (basic and acidic residues); it reads DQGKHSDSDYREDG. The segment covering 32–67 has biased composition (low complexity); sequence SDAGSSSSSSRASSQSNSTKVTPCSECKSSSSPGGS. The span at 92-106 shows a compositional bias: acidic residues; sequence WAPEEDGEEEEEEDE. Composition is skewed to basic and acidic residues over residues 107 to 123 and 153 to 162; these read RDQRGYRDDRSPAREPG and HQHDPQDLRH. Ser-117 carries the phosphoserine modification. Polar residues predominate over residues 242–255; it reads RNQGQARTNSTSAQ. Basic and acidic residues predominate over residues 309–323; sequence GSDKDSDADDSKTET. Polar residues predominate over residues 324 to 335; that stretch reads SLDTPLSPMSKQ. The span at 344 to 354 shows a compositional bias: acidic residues; it reads TTEEESESLDD. Residues 424–458 are a coiled coil; it reads IGQLQVIVNDLHSQIESLNEELVQLLLIRDELHTE.

The protein belongs to the SCHIP1 family. Homooligomer (via coiled coil domain). Interacts with NF2; the interaction is direct. Interacts with ANK3. As to expression, preferentially expressed in brain, skeletal muscles and heart. Also expressed in detected in pancreas, kidney, liver, lung, and placenta.

Its subcellular location is the cytoplasm. The chain is Schwannomin-interacting protein 1 from Homo sapiens (Human).